A 305-amino-acid polypeptide reads, in one-letter code: MIKQRTLKRIVQATGVGLHTGKKVTLTLRPAPANTGVIYRRTDLNPPVDFPADAKSVRDTMLCTCLVNEHDVRISTVEHLNAALAGLGIDNIIVEVDAPEIPIMDGSAAPFVYLLLDAGIDELNCAKKFVRIKETVRVEDGDKWAEFKPYNGFSLDFTIDFNHPAIDASTQRYTLNFSADAFMRQISRARTFGFMRDIEYLQSRGLCLGGSFDCAIVVDDYRVLNEDGLRFEDEFVRHKMLDAIGDLFMCGHNIIGAFTAYKSGHALNNKLLQAVLAKQEAWEYVTFEDDAKLPMAFRAPSMVLA.

Zn(2+) contacts are provided by His79, His238, and Asp242. His265 acts as the Proton donor in catalysis.

It belongs to the LpxC family. Zn(2+) serves as cofactor.

It carries out the reaction a UDP-3-O-[(3R)-3-hydroxyacyl]-N-acetyl-alpha-D-glucosamine + H2O = a UDP-3-O-[(3R)-3-hydroxyacyl]-alpha-D-glucosamine + acetate. It participates in glycolipid biosynthesis; lipid IV(A) biosynthesis; lipid IV(A) from (3R)-3-hydroxytetradecanoyl-[acyl-carrier-protein] and UDP-N-acetyl-alpha-D-glucosamine: step 2/6. Functionally, catalyzes the hydrolysis of UDP-3-O-myristoyl-N-acetylglucosamine to form UDP-3-O-myristoylglucosamine and acetate, the committed step in lipid A biosynthesis. The sequence is that of UDP-3-O-acyl-N-acetylglucosamine deacetylase from Klebsiella pneumoniae subsp. pneumoniae (strain ATCC 700721 / MGH 78578).